The chain runs to 255 residues: Methylthioribulose-1-phosphate dehydratase (255 aa).

Residue C111 coordinates substrate. Zn(2+)-binding residues include H128 and H130. E157 serves as the catalytic Proton donor/acceptor. H213 is a Zn(2+) binding site.

Belongs to the aldolase class II family. MtnB subfamily. Requires Zn(2+) as cofactor.

It localises to the cytoplasm. It carries out the reaction 5-(methylsulfanyl)-D-ribulose 1-phosphate = 5-methylsulfanyl-2,3-dioxopentyl phosphate + H2O. It participates in amino-acid biosynthesis; L-methionine biosynthesis via salvage pathway; L-methionine from S-methyl-5-thio-alpha-D-ribose 1-phosphate: step 2/6. Functionally, catalyzes the dehydration of methylthioribulose-1-phosphate (MTRu-1-P) into 2,3-diketo-5-methylthiopentyl-1-phosphate (DK-MTP-1-P). The chain is Methylthioribulose-1-phosphate dehydratase from Talaromyces stipitatus (strain ATCC 10500 / CBS 375.48 / QM 6759 / NRRL 1006) (Penicillium stipitatum).